We begin with the raw amino-acid sequence, 101 residues long: NADH-quinone oxidoreductase subunit K (101 aa).

The next 3 helical transmembrane spans lie at 2-22 (TLSA…YGAL), 28-48 (VIVL…FVAF), and 62-82 (FALF…AALI).

It belongs to the complex I subunit 4L family. As to quaternary structure, NDH-1 is composed of 14 different subunits. Subunits NuoA, H, J, K, L, M, N constitute the membrane sector of the complex.

The protein resides in the cell membrane. It catalyses the reaction a quinone + NADH + 5 H(+)(in) = a quinol + NAD(+) + 4 H(+)(out). NDH-1 shuttles electrons from NADH, via FMN and iron-sulfur (Fe-S) centers, to quinones in the respiratory chain. The immediate electron acceptor for the enzyme in this species is believed to be a menaquinone. Couples the redox reaction to proton translocation (for every two electrons transferred, four hydrogen ions are translocated across the cytoplasmic membrane), and thus conserves the redox energy in a proton gradient. This is NADH-quinone oxidoreductase subunit K from Geobacillus kaustophilus (strain HTA426).